The primary structure comprises 335 residues: Dihydroorotate dehydrogenase (quinone) (335 aa).

FMN is bound by residues 58–62 (AGADK) and Thr-82. Lys-62 contributes to the substrate binding site. 107–111 (NRNGF) is a binding site for substrate. FMN-binding residues include Asn-135 and Asn-168. Asn-168 serves as a coordination point for substrate. Residue Ser-171 is the Nucleophile of the active site. Asn-173 is a substrate binding site. 2 residues coordinate FMN: Lys-213 and Gly-241. 242–243 (NT) contributes to the substrate binding site. FMN-binding positions include Gly-264, Gly-293, and 314–315 (YS).

The protein belongs to the dihydroorotate dehydrogenase family. Type 2 subfamily. Monomer. The cofactor is FMN.

The protein localises to the cell membrane. The enzyme catalyses (S)-dihydroorotate + a quinone = orotate + a quinol. The protein operates within pyrimidine metabolism; UMP biosynthesis via de novo pathway; orotate from (S)-dihydroorotate (quinone route): step 1/1. In terms of biological role, catalyzes the conversion of dihydroorotate to orotate with quinone as electron acceptor. The sequence is that of Dihydroorotate dehydrogenase (quinone) from Actinobacillus pleuropneumoniae serotype 3 (strain JL03).